The sequence spans 382 residues: Exostosin-1 homolog (382 aa).

An N-terminal signal peptide occupies residues 1–20 (MQNVMKFHLVIFMLFGSVRL). N-linked (GlcNAc...) asparagine glycosylation occurs at asparagine 268.

This sequence belongs to the glycosyltransferase 47 family. Interacts with rib-2.

It is found in the endoplasmic reticulum. It localises to the golgi apparatus. Required for the biosynthesis of heparan sulfate by positively regulating N-acetylglucosamine transferase II (GlcNAcT-II) and glucuronyl transferase II (GlcAT-II) activities of glycosyltransferase rib-2. Probably not directly involved in chondroitin sulfate biosynthesis but negatively regulates chondroitin sulfate levels. Maternally required for normal ventral epidermal enclosure and for embryo elongation during the early stages of embryonic development. In addition, involved in the elongation of the pharyngeal isthmus and in the organization of the actin cytoskeleton in the pharyngeal muscles during the later stages embryonic development. In adults, regulates egg-laying and the normal morphogenesis of the vulva. Also involved in the directed migration of hermaphrodite-specific neurons. This chain is Exostosin-1 homolog (rib-1), found in Caenorhabditis elegans.